The primary structure comprises 23 residues: Fimbrial protein (23 aa).

The cysteines at positions 8 and 21 are disulfide-linked.

Belongs to the N-Me-Phe pilin family. The pili are polar flexible filaments of about 5.4 nanometers diameter and 2.5 micrometers average length; they consist of only a single polypeptide chain arranged in a helical configuration of five subunits per turn in the assembled pilus.

It is found in the fimbrium. This Pseudomonas aeruginosa protein is Fimbrial protein (pil).